Here is an 892-residue protein sequence, read N- to C-terminus: Zinc finger protein 512B (892 aa).

Positions 1–82 (MTDPFCVGGR…KKGRPKAENQ (82 aa)) are disordered. Low complexity predominate over residues 8–19 (GGRRLPGSSKSG). The segment at 105-129 (VKCPNSGCWLEFPSIYGLKYHYQRC) adopts a C2H2-type 1; atypical zinc-finger fold. The C2H2-type 2 zinc finger occupies 140–163 (FPCPFCEAAFTSKTQLEKHRIWNH). Disordered stretches follow at residues 323–473 (MVLL…RKKV) and 562–582 (EHSA…EERE). A compositionally biased stretch (polar residues) spans 371–384 (SMGQSSAFQLSADT). The span at 385 to 398 (SSGSLSPGSRPSGG) shows a compositional bias: low complexity. S409 carries the phosphoserine modification. Positions 418 to 428 (TKHRRKQKTPK) are enriched in basic residues. Residues 421–427 (RRKQKTP) carry the NuRD interaction motif motif. The C2H2-type 3 zinc finger occupies 540–563 (LKCQHCRKQFKSKAGLNYHTMAEH). The segment at 594 to 618 (LRCPQEGCGAAFSSLMGYQYHQRRC) adopts a C2H2-type 4; atypical zinc-finger fold. The C2H2-type 5 zinc-finger motif lies at 630 to 653 (FPCTHCGKTYRSKAGHDYHVRSEH). The tract at residues 649–682 (VRSEHTAPPPEEPTDKSPEAEDPLGVERTPSGRV) is disordered. The residue at position 686 (S686) is a Phosphoserine. A C2H2-type 6; atypical zinc finger spans residues 750–774 (VNCPNDCCEAIYSSVSGLKAHLASC). The C2H2-type 7 zinc-finger motif lies at 784–807 (YRCLLCPKEFSSESGVKYHILKTH). Residues 812–892 (FRTSADPPPK…KVGVSKAPEK (81 aa)) form a disordered region. Residues 819–831 (PPKHRSQDSLVPK) are compositionally biased toward basic and acidic residues. Over residues 832 to 849 (KEKKKNLAGGKKRGRKPK) the composition is skewed to basic residues. The segment covering 850 to 876 (ERTPEEPVAKLPPRRDDWPPGCRDKGA) has biased composition (basic and acidic residues).

This sequence belongs to the krueppel C2H2-type zinc-finger protein family. In terms of assembly, interacts (via its NuRD interaction motif) with RBBP4 of the nucleosome remodeling and deacetylase (NuRD) complex; the interaction is direct and may play a role in repressing gene expression.

The protein resides in the nucleus. Its function is as follows. Involved in transcriptional regulation by repressing gene expression. Associates with the nucleosome remodeling and histone deacetylase (NuRD) complex, which promotes transcriptional repression by histone deacetylation and nucleosome remodeling. This Homo sapiens (Human) protein is Zinc finger protein 512B (ZNF512B).